Reading from the N-terminus, the 246-residue chain is Major prion protein (246 aa).

Positions 1 to 15 (MLVLFVATWSDLGLC) are cleaved as a signal peptide. Positions 16–223 (KKRPKPGGWN…ESQAYYQRGS (208 aa)) are interaction with GRB2, ERI3 and SYN1. A disordered region spans residues 18-102 (RPKPGGWNTG…HKPSKPKTSM (85 aa)). 5 tandem repeats follow at residues 44-52 (PQGGGGWGQ), 53-60 (PHGGGWGQ), 61-68 (PHGGGWGQ), 69-76 (PHGGGWGQ), and 77-84 (PHGGGWGQ). Positions 44–84 (PQGGGGWGQPHGGGWGQPHGGGWGQPHGGGWGQPHGGGWGQ) are 5 X 8 AA tandem repeats of P-H-G-G-G-W-G-Q. Residues 45–88 (QGGGGWGQPHGGGWGQPHGGGWGQPHGGGWGQPHGGGWGQGGGT) show a composition bias toward gly residues. Histidine 54, glycine 55, glycine 56, histidine 62, glycine 63, glycine 64, histidine 70, glycine 71, glycine 72, histidine 78, glycine 79, and glycine 80 together coordinate Cu(2+). Basic residues predominate over residues 91-102 (QWHKPSKPKTSM). The cysteines at positions 172 and 207 are disulfide-linked. Residues asparagine 174 and asparagine 190 are each glycosylated (N-linked (GlcNAc...) asparagine). A lipid anchor (GPI-anchor amidated serine) is attached at serine 223. Positions 224-246 (SMVLFSSPPVILLISFLIFLIVG) are cleaved as a propeptide — removed in mature form.

It belongs to the prion family. In terms of assembly, monomer and homodimer. Has a tendency to aggregate into amyloid fibrils containing a cross-beta spine, formed by a steric zipper of superposed beta-strands. Soluble oligomers may represent an intermediate stage on the path to fibril formation. Copper binding may promote oligomerization. Interacts with GRB2, APP, ERI3/PRNPIP and SYN1. Mislocalized cytosolically exposed PrP interacts with MGRN1; this interaction alters MGRN1 subcellular location and causes lysosomal enlargement. Interacts with KIAA1191.

Its subcellular location is the cell membrane. The protein localises to the golgi apparatus. In terms of biological role, its primary physiological function is unclear. Has cytoprotective activity against internal or environmental stresses. May play a role in neuronal development and synaptic plasticity. May be required for neuronal myelin sheath maintenance. May play a role in iron uptake and iron homeostasis. Soluble oligomers are toxic to cultured neuroblastoma cells and induce apoptosis (in vitro). Association with GPC1 (via its heparan sulfate chains) targets PRNP to lipid rafts. Also provides Cu(2+) or Zn(2+) for the ascorbate-mediated GPC1 deaminase degradation of its heparan sulfate side chains. The sequence is that of Major prion protein (PRNP) from Cercocebus atys (Sooty mangabey).